A 383-amino-acid chain; its full sequence is Queuine tRNA-ribosyltransferase (383 aa).

The active-site Proton acceptor is Asp-89. Substrate contacts are provided by residues 89–93 (DSGGF), Asp-143, Gln-187, and Gly-214. The interval 245-251 (GVGDLID) is RNA binding. The active-site Nucleophile is the Asp-264. Positions 269–273 (TRNAR) are RNA binding; important for wobble base 34 recognition. Positions 302, 304, 307, and 333 each coordinate Zn(2+).

Belongs to the queuine tRNA-ribosyltransferase family. Homodimer. Within each dimer, one monomer is responsible for RNA recognition and catalysis, while the other monomer binds to the replacement base PreQ1. Zn(2+) is required as a cofactor.

The enzyme catalyses 7-aminomethyl-7-carbaguanine + guanosine(34) in tRNA = 7-aminomethyl-7-carbaguanosine(34) in tRNA + guanine. It participates in tRNA modification; tRNA-queuosine biosynthesis. In terms of biological role, catalyzes the base-exchange of a guanine (G) residue with the queuine precursor 7-aminomethyl-7-deazaguanine (PreQ1) at position 34 (anticodon wobble position) in tRNAs with GU(N) anticodons (tRNA-Asp, -Asn, -His and -Tyr). Catalysis occurs through a double-displacement mechanism. The nucleophile active site attacks the C1' of nucleotide 34 to detach the guanine base from the RNA, forming a covalent enzyme-RNA intermediate. The proton acceptor active site deprotonates the incoming PreQ1, allowing a nucleophilic attack on the C1' of the ribose to form the product. After dissociation, two additional enzymatic reactions on the tRNA convert PreQ1 to queuine (Q), resulting in the hypermodified nucleoside queuosine (7-(((4,5-cis-dihydroxy-2-cyclopenten-1-yl)amino)methyl)-7-deazaguanosine). The protein is Queuine tRNA-ribosyltransferase of Thermodesulfovibrio yellowstonii (strain ATCC 51303 / DSM 11347 / YP87).